We begin with the raw amino-acid sequence, 947 residues long: Protein NETWORKED 2D (947 aa).

The region spanning 10-90 (YSWWWASHIR…ERYDHISTEL (81 aa)) is the NAB domain. Coiled-coil stretches lie at residues 176–205 (KPEA…SSYE), 247–342 (MTET…HFES), and 375–433 (TALI…VLDK). Disordered regions lie at residues 455–555 (NLHE…DKTD) and 580–620 (EKQG…GEPD). The segment covering 474–514 (PQKDLEGEKRTLDISEEIKEHQKETGEEKKEAPVKSVKFEQ) has biased composition (basic and acidic residues). Positions 525 to 536 (TIPSTNPDTVLE) are enriched in polar residues. Basic and acidic residues-rich tracts occupy residues 537–555 (STEK…DKTD), 580–589 (EKQGESDKID), and 610–620 (EDQKEKEGEPD). Coiled-coil stretches lie at residues 645–684 (RNFK…LLQK) and 744–773 (GQIQ…DGSS).

The protein belongs to the NET family.

Plant-specific actin binding protein. May be part of a membrane-cytoskeletal adapter complex. The sequence is that of Protein NETWORKED 2D from Arabidopsis thaliana (Mouse-ear cress).